The chain runs to 334 residues: Tryptophan--tRNA ligase (334 aa).

ATP-binding positions include 11–13 and 19–20; these read QPS and GN. The 'HIGH' region signature appears at 12 to 20; it reads PSGELTIGN. Asp135 contacts L-tryptophan. ATP is bound by residues 147 to 149, Val186, and 195 to 199; these read GED and KMSKS. The 'KMSKS' region motif lies at 195–199; it reads KMSKS.

The protein belongs to the class-I aminoacyl-tRNA synthetase family. In terms of assembly, homodimer.

The protein localises to the cytoplasm. The catalysed reaction is tRNA(Trp) + L-tryptophan + ATP = L-tryptophyl-tRNA(Trp) + AMP + diphosphate + H(+). In terms of biological role, catalyzes the attachment of tryptophan to tRNA(Trp). Amino acylates tRNA(Trp) with both L- and D-tryptophan, although D-tryptophan is a poor substrate. In Escherichia coli (strain K12), this protein is Tryptophan--tRNA ligase.